The following is a 437-amino-acid chain: Double-stranded RNA-binding protein 3 (437 aa).

The tract at residues 1–22 is disordered; sequence MKKKSAPTPLPPETANTSPAPI. 2 DRBM domains span residues 35 to 104 and 120 to 187; these read VFKS…EIVK and LCKN…AIQG. Basic and acidic residues-rich tracts occupy residues 288 to 310 and 320 to 330; these read AKRVEDEPPRDIEMVQPDKENQH and DEARVEQEPSR. Residues 288–331 are disordered; it reads AKRVEDEPPRDIEMVQPDKENQHSDAALVQPDDEARVEQEPSRD.

Its function is as follows. Binds double-stranded RNA. In Oryza sativa subsp. japonica (Rice), this protein is Double-stranded RNA-binding protein 3 (DRB3).